An 82-amino-acid polypeptide reads, in one-letter code: Large ribosomal subunit protein bL27 (82 aa).

Residues 1–26 (MAHKKGQGASRNGRDSESKRLGMKVG) form a disordered region.

This sequence belongs to the bacterial ribosomal protein bL27 family.

This Chlamydia felis (strain Fe/C-56) (Chlamydophila felis) protein is Large ribosomal subunit protein bL27.